Here is a 212-residue protein sequence, read N- to C-terminus: Adenylate kinase (212 aa).

An ATP-binding site is contributed by 14–19 (GSGKGT). The segment at 34–63 (STGDLFRKKISEDSQFAAQIQNYLSSGSYV) is NMP. Residues T35, R40, 61-63 (SYV), 89-92 (GYPR), and Q96 contribute to the AMP site. Positions 126–163 (QRLFCQKCQKSYNLLLAKPKNELKCDLDSTDLITRNDD) are LID. Residue R127 coordinates ATP. C130 and C133 together coordinate Zn(2+). Position 136–137 (136–137 (SY)) interacts with ATP. Residues C150 and D153 each contribute to the Zn(2+) site. Residues R160 and R171 each coordinate AMP. Q199 serves as a coordination point for ATP.

This sequence belongs to the adenylate kinase family. In terms of assembly, monomer.

The protein resides in the cytoplasm. It carries out the reaction AMP + ATP = 2 ADP. It functions in the pathway purine metabolism; AMP biosynthesis via salvage pathway; AMP from ADP: step 1/1. In terms of biological role, catalyzes the reversible transfer of the terminal phosphate group between ATP and AMP. Plays an important role in cellular energy homeostasis and in adenine nucleotide metabolism. This Mesomycoplasma hyopneumoniae (strain J / ATCC 25934 / NCTC 10110) (Mycoplasma hyopneumoniae) protein is Adenylate kinase.